Here is a 917-residue protein sequence, read N- to C-terminus: Protein STE5 (917 aa).

2 disordered regions span residues 1–25 and 58–151; these read MMET…YSGT and FQRS…LSDN. Residues 16–25 show a composition bias toward polar residues; the sequence is FGSSTQYSGT. Residues 69-84 show a composition bias toward low complexity; the sequence is SPSPISSSTFSFSPKS. Composition is skewed to polar residues over residues 85–110 and 118–138; these read RVTS…STDY and TSSL…NLSR. The residue at position 329 (serine 329) is a Phosphoserine. Residues 778 to 794 show a composition bias toward acidic residues; that stretch reads HDDDDEEDNDDSTDNEL. The segment at 778 to 821 is disordered; that stretch reads HDDDDEEDNDDSTDNELDNSSGSLSDAESTTTIHIDSPFDNENA. A compositionally biased stretch (polar residues) spans 799-821; the sequence is GSLSDAESTTTIHIDSPFDNENA.

This sequence to yeast FAR1. Post-translationally, may be regulated at the phosphorylation level, and by the mating type of the cell and depends on an intact pheromone-response pathway.

It is found in the cytoplasm. In terms of biological role, component of the pheromone signal transduction pathway. It mediates pheromone signals acting between STE20 and STE11. It is absolutely required for pheromone-induced transcription of FUS1. May play a role in cell-cycle arrest in response to pheromone. The chain is Protein STE5 (STE5) from Saccharomyces cerevisiae (strain ATCC 204508 / S288c) (Baker's yeast).